A 91-amino-acid polypeptide reads, in one-letter code: UPF0250 protein PSEEN4821 (91 aa).

It belongs to the UPF0250 family.

The protein is UPF0250 protein PSEEN4821 of Pseudomonas entomophila (strain L48).